We begin with the raw amino-acid sequence, 359 residues long: DNA replication and repair protein RecF (359 aa).

ATP is bound at residue 30-37; that stretch reads GPNGSGKT.

This sequence belongs to the RecF family.

The protein resides in the cytoplasm. In terms of biological role, the RecF protein is involved in DNA metabolism; it is required for DNA replication and normal SOS inducibility. RecF binds preferentially to single-stranded, linear DNA. It also seems to bind ATP. The polypeptide is DNA replication and repair protein RecF (Vibrio vulnificus (strain YJ016)).